Consider the following 129-residue polypeptide: Glycine cleavage system H protein (129 aa).

A Lipoyl-binding domain is found at 24 to 106 (SYTVGITEHA…YGEGWFFRVM (83 aa)). Position 65 is an N6-lipoyllysine (Lys65).

The protein belongs to the GcvH family. In terms of assembly, the glycine cleavage system is composed of four proteins: P, T, L and H. It depends on (R)-lipoate as a cofactor.

The glycine cleavage system catalyzes the degradation of glycine. The H protein shuttles the methylamine group of glycine from the P protein to the T protein. This Shewanella baltica (strain OS185) protein is Glycine cleavage system H protein.